We begin with the raw amino-acid sequence, 74 residues long: NAD(P)H-quinone oxidoreductase subunit L (74 aa).

2 helical membrane passes run 5–25 (LIIA…VPAA) and 43–63 (AFMY…APLL).

The protein belongs to the complex I NdhL subunit family. As to quaternary structure, NDH-1 can be composed of about 15 different subunits; different subcomplexes with different compositions have been identified which probably have different functions.

The protein localises to the cellular thylakoid membrane. It carries out the reaction a plastoquinone + NADH + (n+1) H(+)(in) = a plastoquinol + NAD(+) + n H(+)(out). The enzyme catalyses a plastoquinone + NADPH + (n+1) H(+)(in) = a plastoquinol + NADP(+) + n H(+)(out). In terms of biological role, NDH-1 shuttles electrons from an unknown electron donor, via FMN and iron-sulfur (Fe-S) centers, to quinones in the respiratory and/or the photosynthetic chain. The immediate electron acceptor for the enzyme in this species is believed to be plastoquinone. Couples the redox reaction to proton translocation, and thus conserves the redox energy in a proton gradient. Cyanobacterial NDH-1 also plays a role in inorganic carbon-concentration. The sequence is that of NAD(P)H-quinone oxidoreductase subunit L from Synechococcus elongatus (strain ATCC 33912 / PCC 7942 / FACHB-805) (Anacystis nidulans R2).